We begin with the raw amino-acid sequence, 357 residues long: Chorismate synthase (357 aa).

The segment covering 38–49 has biased composition (basic and acidic residues); it reads EKDIQPDLDRRK. A disordered region spans residues 38–60; it reads EKDIQPDLDRRKPGTSRYTTPRR. Residues arginine 48 and arginine 54 each coordinate NADP(+). FMN-binding positions include 125-127, 243-244, glycine 283, 298-302, and arginine 324; these read RSS, NA, and KPTSS.

This sequence belongs to the chorismate synthase family. In terms of assembly, homotetramer. The cofactor is FMNH2.

The enzyme catalyses 5-O-(1-carboxyvinyl)-3-phosphoshikimate = chorismate + phosphate. It functions in the pathway metabolic intermediate biosynthesis; chorismate biosynthesis; chorismate from D-erythrose 4-phosphate and phosphoenolpyruvate: step 7/7. Catalyzes the anti-1,4-elimination of the C-3 phosphate and the C-6 proR hydrogen from 5-enolpyruvylshikimate-3-phosphate (EPSP) to yield chorismate, which is the branch point compound that serves as the starting substrate for the three terminal pathways of aromatic amino acid biosynthesis. This reaction introduces a second double bond into the aromatic ring system. The chain is Chorismate synthase from Haemophilus influenzae (strain PittGG).